A 141-amino-acid chain; its full sequence is Large ribosomal subunit protein uL16c (141 aa).

Belongs to the universal ribosomal protein uL16 family. As to quaternary structure, part of the 50S ribosomal subunit.

Its subcellular location is the plastid. It is found in the chloroplast. The sequence is that of Large ribosomal subunit protein uL16c from Zygnema circumcarinatum (Green alga).